We begin with the raw amino-acid sequence, 461 residues long: Elongation factor 1-alpha (461 aa).

G2 carries the post-translational modification N,N,N-trimethylglycine. A tr-type G domain is found at K5 to T242. The G1 stretch occupies residues G14 to S21. G14–S21 contributes to the GTP binding site. Positions G70 to D74 are G2. The G3 stretch occupies residues D91–G94. GTP-binding positions include N153–D156 and S194–W196. Residues N153–D156 form a G4 region. The interval S194–W196 is G5. A 5-glutamyl glycerylphosphorylethanolamine mark is found at E301 and E374.

The protein belongs to the TRAFAC class translation factor GTPase superfamily. Classic translation factor GTPase family. EF-Tu/EF-1A subfamily.

The protein resides in the cytoplasm. The catalysed reaction is GTP + H2O = GDP + phosphate + H(+). In terms of biological role, translation elongation factor that catalyzes the GTP-dependent binding of aminoacyl-tRNA (aa-tRNA) to the A-site of ribosomes during the elongation phase of protein synthesis. Base pairing between the mRNA codon and the aa-tRNA anticodon promotes GTP hydrolysis, releasing the aa-tRNA from EEF1A1 and allowing its accommodation into the ribosome. The growing protein chain is subsequently transferred from the P-site peptidyl tRNA to the A-site aa-tRNA, extending it by one amino acid through ribosome-catalyzed peptide bond formation. This Oryzias latipes (Japanese rice fish) protein is Elongation factor 1-alpha (eef1a).